A 220-amino-acid chain; its full sequence is Urease accessory protein UreF (220 aa).

This sequence belongs to the UreF family. As to quaternary structure, ureD, UreF and UreG form a complex that acts as a GTP-hydrolysis-dependent molecular chaperone, activating the urease apoprotein by helping to assemble the nickel containing metallocenter of UreC. The UreE protein probably delivers the nickel.

It is found in the cytoplasm. Its function is as follows. Required for maturation of urease via the functional incorporation of the urease nickel metallocenter. The sequence is that of Urease accessory protein UreF from Jannaschia sp. (strain CCS1).